We begin with the raw amino-acid sequence, 236 residues long: Small ribosomal subunit protein uS2c (236 aa).

This sequence belongs to the universal ribosomal protein uS2 family.

The protein resides in the plastid. The protein localises to the chloroplast. The sequence is that of Small ribosomal subunit protein uS2c (rps2) from Lactuca sativa (Garden lettuce).